The chain runs to 343 residues: Cytosolic Fe-S cluster assembly factor CFD1 (343 aa).

15–22 (GKGGVGKS) provides a ligand contact to ATP. 2 stretches are compositionally biased toward polar residues: residues 80–91 (PSSDGLNGSQRA) and 99–110 (ESSSSTVETAPQ). Residues 80–110 (PSSDGLNGSQRANKPDDSNESSSSTVETAPQ) are disordered. 2 residues coordinate [4Fe-4S] cluster: Cys-241 and Cys-244.

This sequence belongs to the Mrp/NBP35 ATP-binding proteins family. NUBP2/CFD1 subfamily. Heterotetramer of 2 NBP35 and 2 CFD1 chains. Requires [4Fe-4S] cluster as cofactor.

The protein resides in the cytoplasm. Component of the cytosolic iron-sulfur (Fe/S) protein assembly (CIA) machinery. Required for maturation of extramitochondrial Fe-S proteins. The NBP35-CFD1 heterotetramer forms a Fe-S scaffold complex, mediating the de novo assembly of an Fe-S cluster and its transfer to target apoproteins. The polypeptide is Cytosolic Fe-S cluster assembly factor CFD1 (Coccidioides immitis (strain RS) (Valley fever fungus)).